The following is a 392-amino-acid chain: DNA replication and repair protein RecF (392 aa).

30–37 is an ATP binding site; that stretch reads GRNGFGKT.

The protein belongs to the RecF family.

The protein localises to the cytoplasm. In terms of biological role, the RecF protein is involved in DNA metabolism; it is required for DNA replication and normal SOS inducibility. RecF binds preferentially to single-stranded, linear DNA. It also seems to bind ATP. The polypeptide is DNA replication and repair protein RecF (Corynebacterium aurimucosum (strain ATCC 700975 / DSM 44827 / CIP 107346 / CN-1) (Corynebacterium nigricans)).